A 66-amino-acid chain; its full sequence is Toxin Tppa1 (66 aa).

The LCN-type CS-alpha/beta domain maps to 1-63 (KDGYLVGNDG…TWSRSTNRCG (63 aa)). 4 disulfide bridges follow: cysteine 11–cysteine 62, cysteine 15–cysteine 37, cysteine 23–cysteine 43, and cysteine 27–cysteine 45.

Belongs to the long (4 C-C) scorpion toxin superfamily. Sodium channel inhibitor family. Beta subfamily. In terms of tissue distribution, expressed by the venom gland.

It localises to the secreted. Functionally, beta toxins bind voltage-independently at site-4 of sodium channels (Nav) and shift the voltage of activation toward more negative potentials thereby affecting sodium channel activation and promoting spontaneous and repetitive firing. This is Toxin Tppa1 from Tityus pachyurus (Colombian scorpion).